The sequence spans 220 residues: 3-keto-L-gulonate-6-phosphate decarboxylase SgbH (220 aa).

Position 11 (Asp11) interacts with substrate. Residues Glu33 and Asp62 each coordinate Mg(2+). Substrate is bound at residue Arg192.

The protein belongs to the HPS/KGPDC family. KGPDC subfamily. In terms of assembly, homodimer. Mg(2+) serves as cofactor.

It carries out the reaction 3-dehydro-L-gulonate 6-phosphate + H(+) = L-xylulose 5-phosphate + CO2. Functionally, catalyzes the decarboxylation of 3-keto-L-gulonate-6-P into L-xylulose-5-P. May be involved in the utilization of 2,3-diketo-L-gulonate. This Escherichia coli (strain K12) protein is 3-keto-L-gulonate-6-phosphate decarboxylase SgbH (sgbH).